A 739-amino-acid chain; its full sequence is Tegument protein UL47 (739 aa).

A compositionally biased stretch (basic and acidic residues) spans 1 to 13 (MDAARDGRPERRR). Disordered regions lie at residues 1-123 (MDAA…QDYL) and 154-198 (QFPP…DDAA). The short motif at 10-30 (ERRRAVSGTYRTHPFQRPSAR) is the Nuclear localization signal element. Residues 28–53 (SARRSAGRPARCGRRGRGAPRVRRPR) show a composition bias toward basic residues. The span at 62 to 87 (EDTSEDENVYDYIDGDSSDSADDYDS) shows a compositional bias: acidic residues. Positions 94-121 (RGPNHGAGDAMDTDAPPERAPEGGAPQD) match the Nuclear export signal motif. The Nuclear export signal signature appears at 483–493 (LSAYLTLFVAL).

The protein belongs to the alphaherpesvirinae HHV-1 UL47 family. Interacts with US3 kinase. Interacts with UL31 and UL34; these interactions seem important for efficient virion nuclear egress. Interacts with UL41/VHS. Interacts with host DDB1. In terms of processing, monoubiquitinated. Phosphorylated by US3. This phosphorylation is required for proper nuclear localization.

The protein localises to the virion tegument. The protein resides in the host nucleus. It is found in the host cytoplasm. Its function is as follows. Tegument protein that can bind to various RNA transcripts. Plays a role in the attenuation of selective viral and cellular mRNA degradation by modulating the activity of host shutoff RNase UL41/VHS. Also plays a role in the primary envelopment of virions in the perinuclear space, probably by interacting with two nuclear egress proteins UL31 and UL34. The polypeptide is Tegument protein UL47 (Bovine herpesvirus 1.1 (strain Cooper) (BoHV-1)).